A 96-amino-acid chain; its full sequence is (4S)-4-hydroxy-5-phosphonooxypentane-2,3-dione isomerase (96 aa).

An ABM domain is found at histidine 2–phenylalanine 91.

Belongs to the LsrG family. As to quaternary structure, homodimer.

It localises to the cytoplasm. The enzyme catalyses (2S)-2-hydroxy-3,4-dioxopentyl phosphate = 3-hydroxy-2,4-dioxopentyl phosphate. Functionally, involved in the degradation of phospho-AI-2, thereby terminating induction of the lsr operon and closing the AI-2 signaling cycle. Catalyzes the conversion of (4S)-4-hydroxy-5-phosphonooxypentane-2,3-dione (P-DPD) to 3-hydroxy-5-phosphonooxypentane-2,4-dione (P-HPD). The chain is (4S)-4-hydroxy-5-phosphonooxypentane-2,3-dione isomerase from Escherichia coli O157:H7.